A 399-amino-acid polypeptide reads, in one-letter code: MKRYDYPIVKTLLDTDAYKLHMQQAVFYHYKNVNVVAEFLCRGDNFLGCYANILLDQISMMRSLSLSHEEYVYMTSFPFFKKEYLHWLKKFRYNVSQVKINSYQGRLHIRISGLWKEVILWEVPILALISEVFHGNFSPEITSQSALQYLDIKLKKFFNRTKYIDLSHLKIVDFGTRRRFSYDVQYSIVKRLKESFPFLIGSSNYHIARILKIKPVGTQAHEWFQAHQQIGSNLKNSQILALQKWLYQYKNHLGIALTDSITMDAFLDDFNLHFASFYQGIRHDSGDPVKWGEKALKHYEKLGIDPCTKTLLFSDNLDFKKIISLYKKFHKKINVIFGIGTKLTCDIPYVKPLNIVIKLVECNGKPVAKISDSPGKTFCLDRIFLKNLCQVFNVSLKNR.

Phosphohistidine; by autocatalysis is present on histidine 221.

The protein belongs to the NAPRTase family. Transiently phosphorylated on a His residue during the reaction cycle. Phosphorylation strongly increases the affinity for substrates and increases the rate of nicotinate D-ribonucleotide production. Dephosphorylation regenerates the low-affinity form of the enzyme, leading to product release.

It catalyses the reaction nicotinate + 5-phospho-alpha-D-ribose 1-diphosphate + ATP + H2O = nicotinate beta-D-ribonucleotide + ADP + phosphate + diphosphate. It functions in the pathway cofactor biosynthesis; NAD(+) biosynthesis; nicotinate D-ribonucleotide from nicotinate: step 1/1. In terms of biological role, catalyzes the synthesis of beta-nicotinate D-ribonucleotide from nicotinate and 5-phospho-D-ribose 1-phosphate at the expense of ATP. In Buchnera aphidicola subsp. Acyrthosiphon pisum (strain 5A), this protein is Nicotinate phosphoribosyltransferase.